Consider the following 415-residue polypeptide: Tyrosine--tRNA ligase (415 aa).

The 'HIGH' region signature appears at Pro54 to His63. The 'KMSKS' region motif lies at Lys248–Ser252. Lys251 is an ATP binding site. The region spanning Ala351–Val414 is the S4 RNA-binding domain.

This sequence belongs to the class-I aminoacyl-tRNA synthetase family. TyrS type 2 subfamily. As to quaternary structure, homodimer.

It localises to the cytoplasm. It carries out the reaction tRNA(Tyr) + L-tyrosine + ATP = L-tyrosyl-tRNA(Tyr) + AMP + diphosphate + H(+). Its function is as follows. Catalyzes the attachment of tyrosine to tRNA(Tyr) in a two-step reaction: tyrosine is first activated by ATP to form Tyr-AMP and then transferred to the acceptor end of tRNA(Tyr). This chain is Tyrosine--tRNA ligase, found in Synechococcus sp. (strain CC9605).